The following is a 109-amino-acid chain: Fluoride-specific ion channel FluC 1 (109 aa).

Helical transmembrane passes span 21 to 41, 52 to 72, and 84 to 104; these read LFIN…GFFI, IILS…YFLY, and IIFC…GFWI.

Belongs to the fluoride channel Fluc/FEX (TC 1.A.43) family.

Its subcellular location is the cell inner membrane. It carries out the reaction fluoride(in) = fluoride(out). Functionally, fluoride-specific ion channel. Important for reducing fluoride concentration in the cell, thus reducing its toxicity. This is Fluoride-specific ion channel FluC 1 from Prochlorococcus marinus (strain MIT 9312).